Reading from the N-terminus, the 420-residue chain is Gamma-glutamyl phosphate reductase (420 aa).

This sequence belongs to the gamma-glutamyl phosphate reductase family.

The protein localises to the cytoplasm. The catalysed reaction is L-glutamate 5-semialdehyde + phosphate + NADP(+) = L-glutamyl 5-phosphate + NADPH + H(+). It functions in the pathway amino-acid biosynthesis; L-proline biosynthesis; L-glutamate 5-semialdehyde from L-glutamate: step 2/2. Functionally, catalyzes the NADPH-dependent reduction of L-glutamate 5-phosphate into L-glutamate 5-semialdehyde and phosphate. The product spontaneously undergoes cyclization to form 1-pyrroline-5-carboxylate. The sequence is that of Gamma-glutamyl phosphate reductase from Streptococcus gordonii (strain Challis / ATCC 35105 / BCRC 15272 / CH1 / DL1 / V288).